A 1103-amino-acid polypeptide reads, in one-letter code: Isoleucine--tRNA ligase (1103 aa).

Positions 53 to 63 (PFANGLPHYGH) match the 'HIGH' region motif. Positions 628–632 (KLSKR) match the 'KMSKS' region motif. Lysine 631 provides a ligand contact to ATP.

The protein belongs to the class-I aminoacyl-tRNA synthetase family. IleS type 2 subfamily. Monomer. Zn(2+) serves as cofactor.

The protein resides in the cytoplasm. The enzyme catalyses tRNA(Ile) + L-isoleucine + ATP = L-isoleucyl-tRNA(Ile) + AMP + diphosphate. In terms of biological role, catalyzes the attachment of isoleucine to tRNA(Ile). As IleRS can inadvertently accommodate and process structurally similar amino acids such as valine, to avoid such errors it has two additional distinct tRNA(Ile)-dependent editing activities. One activity is designated as 'pretransfer' editing and involves the hydrolysis of activated Val-AMP. The other activity is designated 'posttransfer' editing and involves deacylation of mischarged Val-tRNA(Ile). This is Isoleucine--tRNA ligase from Rickettsia akari (strain Hartford).